The primary structure comprises 504 residues: Glutamate--tRNA ligase (504 aa).

The 'HIGH' region motif lies at proline 25 to leucine 35. Residues cysteine 122, cysteine 124, cysteine 149, and aspartate 151 each coordinate Zn(2+). The short motif at lysine 270–arginine 274 is the 'KMSKS' region element. Lysine 273 contributes to the ATP binding site.

This sequence belongs to the class-I aminoacyl-tRNA synthetase family. Glutamate--tRNA ligase type 1 subfamily. In terms of assembly, monomer. Requires Zn(2+) as cofactor.

It is found in the cytoplasm. It carries out the reaction tRNA(Glu) + L-glutamate + ATP = L-glutamyl-tRNA(Glu) + AMP + diphosphate. Functionally, catalyzes the attachment of glutamate to tRNA(Glu) in a two-step reaction: glutamate is first activated by ATP to form Glu-AMP and then transferred to the acceptor end of tRNA(Glu). The chain is Glutamate--tRNA ligase from Streptomyces griseus subsp. griseus (strain JCM 4626 / CBS 651.72 / NBRC 13350 / KCC S-0626 / ISP 5235).